An 872-amino-acid polypeptide reads, in one-letter code: Metabotropic glutamate receptor 2 (872 aa).

An N-terminal signal peptide occupies residues 1 to 18 (MGSLLALLALLLLWGAVA). The Extracellular portion of the chain corresponds to 19–567 (EGPAKKVLTL…QEYIRWGDAW (549 aa)). Cys50 and Cys92 are joined by a disulfide. L-glutamate is bound by residues Arg57, Arg61, Ser145, Ala166, and Thr168. Residues Asn203 and Asn286 are each glycosylated (N-linked (GlcNAc...) asparagine). Cystine bridges form between Cys234–Cys518, Cys355–Cys362, Cys400–Cys407, Cys500–Cys519, Cys504–Cys522, Cys525–Cys537, and Cys540–Cys553. Position 295 (Asp295) interacts with L-glutamate. N-linked (GlcNAc...) asparagine glycosylation occurs at Asn338. Lys377 is a binding site for L-glutamate. N-linked (GlcNAc...) asparagine glycosylation occurs at Asn402. An N-linked (GlcNAc...) asparagine glycan is attached at Asn547. The helical transmembrane segment at 568 to 590 (AVGPVTIACLGALATLFVLGVFV) threads the bilayer. Over 591-604 (RHNATPVVKASGRE) the chain is Cytoplasmic. A helical membrane pass occupies residues 605 to 625 (LCYILLGGVFLCYCMTFIFIA). The Extracellular portion of the chain corresponds to 626–636 (KPSTAVCTLRR). Cys632 and Cys721 form a disulfide bridge. Residues 637 to 655 (LGLGTAFSVCYSALLTKTN) form a helical membrane-spanning segment. The Cytoplasmic segment spans residues 656–679 (RIARIFGGAREGAQRPRFISPASQ). The segment at 677–685 (ASQVAICLA) is important for interaction with HTR2A. The chain crosses the membrane as a helical span at residues 680–700 (VAICLALISGQLLIVVAWLVV). Topologically, residues 701 to 725 (EAPGTGKETAPERREVVTLRCNHRD) are extracellular. Residues 726-747 (ASMLGSLAYNVLLIALCTLYAF) form a helical membrane-spanning segment. The Cytoplasmic segment spans residues 748–760 (KTRKCPENFNEAK). Residues 761–783 (FIGFTMYTTCIIWLAFLPIFYVT) form a helical membrane-spanning segment. Residues 784–793 (SSDYRVQTTT) are Extracellular-facing. A helical membrane pass occupies residues 794–819 (MCVSVSLSGSVVLGCLFAPKLHIILF). Topologically, residues 820 to 872 (QPQKNVVSHRAPTSRFGSAAARASSSLGQGSGSQFVPTVCNGREVVDSTTSSL) are cytoplasmic.

It belongs to the G-protein coupled receptor 3 family. As to quaternary structure, forms heterodimers with GRM3 or GRM4. Interacts with TAMALIN. Interacts with HTR2A. (Microbial infection) Interacts with H5N6 virus protein HA. In terms of assembly, (Microbial infection) Interacts with rabies virus protein G. As to quaternary structure, (Microbial infection) Interacts with SARS-CoV-2 virus spike protein S. In terms of tissue distribution, detected in brain cortex (at protein level). Widely expressed in different regions of the adult brain as well as in fetal brain.

It localises to the cell membrane. Its subcellular location is the synapse. The protein resides in the cell projection. It is found in the dendrite. Its function is as follows. Dimeric G protein-coupled receptor which is activated by the excitatory neurotransmitter L-glutamate. Plays critical roles in modulating synaptic transmission and neuronal excitability. Upon activation by glutamate, inhibits presynaptic calcium channels, reducing further glutamate release and dampening excitatory signaling. Mechanistically, ligand binding causes a conformation change that triggers signaling via guanine nucleotide-binding proteins (G proteins) and modulates the activity of down-stream effectors, such as adenylate cyclase. May mediate suppression of neurotransmission or may be involved in synaptogenesis or synaptic stabilization. In terms of biological role, (Microbial infection) Plays an important role in influenza virus internalization. Functionally, (Microbial infection) Acts as a host entry factor for rabies virus that hijacks the endocytosis of GRM2 to enter cells. (Microbial infection) Acts as a host entry factor for SARS-CoV-2 that hijacks the endocytosis of GRM2 to enter cells. The chain is Metabotropic glutamate receptor 2 from Homo sapiens (Human).